A 1849-amino-acid chain; its full sequence is Brefeldin A-inhibited guanine nucleotide-exchange protein 1 (1849 aa).

Residues 2–224 are DCB; DCB:DCB and DCB:HUS domain interaction; sequence YEGKKTKNMF…QEAKQMEKER (223 aa). A compositionally biased stretch (basic and acidic residues) spans 46–58; that stretch reads AETEKQSPPHGEA. 3 disordered regions span residues 46 to 65, 216 to 301, and 350 to 413; these read AETE…SSTL, EAKQ…ADQA, and INVS…SPGA. 4 positions are modified to phosphoserine: Ser52, Ser286, Ser289, and Ser290. Composition is skewed to polar residues over residues 350-360 and 394-409; these read INVSADGNNGT and SVSS…SSGP. A phosphoserine mark is found at Ser397 and Ser410. The segment at 557–577 is HUS; DCB:HUS domain interaction; sequence ADAQSVVDIYVNYDCDLNAAN. The segment at 634–687 is disordered; that stretch reads PNSQTTLGQEKPSEQETSEMKHPETINRYGSLNSLESTSSSGIGSYSTQMSGTD. A compositionally biased stretch (basic and acidic residues) spans 644-658; sequence KPSEQETSEMKHPET. Positions 664-684 are enriched in low complexity; it reads SLNSLESTSSSGIGSYSTQMS. Residues 709 to 840 enclose the SEC7 domain; that stretch reads FTKKPKRGIQ…IIMLTTDLHS (132 aa). Residues 711 to 715 carry the Nuclear localization signal (NLS) motif; it reads KKPKR. Residues Ser1079, Ser1566, and Ser1569 each carry the phosphoserine modification.

In terms of assembly, homodimer. Interacts with ARFGEF2/BIG2; both proteins are probably part of the same or very similar macromolecular complexes. Interacts with FKBP2. Interacts with MYO9B. Interacts with PRKAR1A and PRKAR2A. Interacts with PPP1CC. Interacts with NCL, FBL, NUP62 and U3 small nucleolar RNA. Interacts with DPY30. Interacts with PDE3A. Interacts with KANK1. Interacts with TBC1D22A and TBC1D22B. In terms of processing, phosphorylated. In vitro phosphorylated by PKA reducing its GEF activity and dephosphorylated by phosphatase PP1. As to expression, abundantly expressed in kidney, somewhat less abundant in lung, spleen, and brain, and still less abundant in heart.

It is found in the cytoplasm. The protein localises to the perinuclear region. It localises to the golgi apparatus. Its subcellular location is the trans-Golgi network. The protein resides in the nucleus. It is found in the nucleolus. The protein localises to the nucleus matrix. It localises to the membrane. With respect to regulation, inhibited by brefeldin A. Promotes guanine-nucleotide exchange on ARF1 and ARF3. Promotes the activation of ARF1/ARF3 through replacement of GDP with GTP. Involved in vesicular trafficking. Required for the maintenance of Golgi structure; the function may be independent of its GEF activity. Required for the maturation of integrin beta-1 in the Golgi. Involved in the establishment and persistence of cell polarity during directed cell movement in wound healing. Proposed to act as A kinase-anchoring protein (AKAP) and may mediate crosstalk between Arf and PKA pathways. Inhibits GAP activity of MYO9B probably through competitive RhoA binding. The function in the nucleus remains to be determined. The polypeptide is Brefeldin A-inhibited guanine nucleotide-exchange protein 1 (ARFGEF1) (Bos taurus (Bovine)).